Reading from the N-terminus, the 114-residue chain is UPF0102 protein HPG27_782 (114 aa).

The protein belongs to the UPF0102 family.

This is UPF0102 protein HPG27_782 from Helicobacter pylori (strain G27).